The following is a 344-amino-acid chain: tRNA N6-adenosine threonylcarbamoyltransferase (344 aa).

2 residues coordinate Fe cation: His-111 and His-115. Substrate-binding positions include 134-138, Asp-167, Gly-180, and Asn-273; that span reads LVSGG. Asp-301 provides a ligand contact to Fe cation.

Belongs to the KAE1 / TsaD family. It depends on Fe(2+) as a cofactor.

The protein resides in the cytoplasm. It carries out the reaction L-threonylcarbamoyladenylate + adenosine(37) in tRNA = N(6)-L-threonylcarbamoyladenosine(37) in tRNA + AMP + H(+). Functionally, required for the formation of a threonylcarbamoyl group on adenosine at position 37 (t(6)A37) in tRNAs that read codons beginning with adenine. Is involved in the transfer of the threonylcarbamoyl moiety of threonylcarbamoyl-AMP (TC-AMP) to the N6 group of A37, together with TsaE and TsaB. TsaD likely plays a direct catalytic role in this reaction. In Cupriavidus necator (strain ATCC 17699 / DSM 428 / KCTC 22496 / NCIMB 10442 / H16 / Stanier 337) (Ralstonia eutropha), this protein is tRNA N6-adenosine threonylcarbamoyltransferase.